We begin with the raw amino-acid sequence, 214 residues long: MALRPLSKIDQLLLGVDKALRAVVPHSNPSTRPLPVSSDEIPELSITESRHVAGLMRINHTGEVCAQGLYHGQAFTAKDENVKQAMQQSAEEEVDHLVWCETRLSELGSHPSVFTPLWYGMSFGLGAVAGAISNDFSLGFVAETEAQVSEHLQDHIGQLPPQDQRSKEILAQMDSEELHHRELALANGGAALSPPIRHTMRWMANRMKATAYHL.

The Fe cation site is built by Glu-63, Glu-93, His-96, Glu-145, Glu-177, and His-180.

Belongs to the COQ7 family. It depends on Fe cation as a cofactor.

The protein localises to the cell membrane. It catalyses the reaction a 5-methoxy-2-methyl-3-(all-trans-polyprenyl)benzene-1,4-diol + AH2 + O2 = a 3-demethylubiquinol + A + H2O. It participates in cofactor biosynthesis; ubiquinone biosynthesis. In terms of biological role, catalyzes the hydroxylation of 2-nonaprenyl-3-methyl-6-methoxy-1,4-benzoquinol during ubiquinone biosynthesis. This is 3-demethoxyubiquinol 3-hydroxylase from Psychrobacter arcticus (strain DSM 17307 / VKM B-2377 / 273-4).